A 348-amino-acid chain; its full sequence is Protein RecA (348 aa).

66–73 provides a ligand contact to ATP; the sequence is GPESSGKT.

The protein belongs to the RecA family.

Its subcellular location is the cytoplasm. Functionally, can catalyze the hydrolysis of ATP in the presence of single-stranded DNA, the ATP-dependent uptake of single-stranded DNA by duplex DNA, and the ATP-dependent hybridization of homologous single-stranded DNAs. It interacts with LexA causing its activation and leading to its autocatalytic cleavage. The polypeptide is Protein RecA (Burkholderia lata (strain ATCC 17760 / DSM 23089 / LMG 22485 / NCIMB 9086 / R18194 / 383)).